Reading from the N-terminus, the 89-residue chain is Small ribosomal subunit protein uS17 (89 aa).

Belongs to the universal ribosomal protein uS17 family. In terms of assembly, part of the 30S ribosomal subunit.

In terms of biological role, one of the primary rRNA binding proteins, it binds specifically to the 5'-end of 16S ribosomal RNA. The chain is Small ribosomal subunit protein uS17 from Bdellovibrio bacteriovorus (strain ATCC 15356 / DSM 50701 / NCIMB 9529 / HD100).